A 787-amino-acid chain; its full sequence is Endonuclease MutS2 (787 aa).

331–338 (GPNTGGKT) serves as a coordination point for ATP. The Smr domain occupies 711-786 (IDVRGKTSDD…EQGVTIVELR (76 aa)).

The protein belongs to the DNA mismatch repair MutS family. MutS2 subfamily. As to quaternary structure, homodimer. Binds to stalled ribosomes, contacting rRNA.

Its function is as follows. Endonuclease that is involved in the suppression of homologous recombination and thus may have a key role in the control of bacterial genetic diversity. Acts as a ribosome collision sensor, splitting the ribosome into its 2 subunits. Detects stalled/collided 70S ribosomes which it binds and splits by an ATP-hydrolysis driven conformational change. Acts upstream of the ribosome quality control system (RQC), a ribosome-associated complex that mediates the extraction of incompletely synthesized nascent chains from stalled ribosomes and their subsequent degradation. Probably generates substrates for RQC. This chain is Endonuclease MutS2, found in Caldicellulosiruptor saccharolyticus (strain ATCC 43494 / DSM 8903 / Tp8T 6331).